We begin with the raw amino-acid sequence, 579 residues long: Nuclear hormone receptor family member nhr-22 (579 aa).

Positions S93 to A173 form a DNA-binding region, nuclear receptor. 2 NR C4-type zinc fingers span residues C96–C117 and C133–C161. A compositionally biased stretch (low complexity) spans L233–P242. A disordered region spans residues L233–T256. One can recognise an NR LBD domain in the interval E304–R577.

The protein belongs to the nuclear hormone receptor family.

Its subcellular location is the nucleus. Orphan nuclear receptor. The sequence is that of Nuclear hormone receptor family member nhr-22 (nhr-22) from Caenorhabditis elegans.